The sequence spans 391 residues: Multidrug resistance protein MdtL (391 aa).

At Met1–Arg3 the chain is on the cytoplasmic side. A helical membrane pass occupies residues Phe4–Val24. The Periplasmic segment spans residues Gly25–His41. Residues Ile42–Ala62 form a helical membrane-spanning segment. Residues Asp63–Lys68 lie on the Cytoplasmic side of the membrane. A helical membrane pass occupies residues Pro69–Glu89. Residues Thr90–Ala92 lie on the Periplasmic side of the membrane. A helical membrane pass occupies residues Leu93–Phe113. Residues Ala114–Ser130 lie on the Cytoplasmic side of the membrane. Residues Leu131–Met151 form a helical membrane-spanning segment. Residues Leu152 to Gln157 are Periplasmic-facing. A helical membrane pass occupies residues Ser158–Leu178. Topologically, residues Lys179–Arg202 are cytoplasmic. The helical transmembrane segment at Phe203–Val222 threads the bilayer. Topologically, residues Asn223 to Met244 are periplasmic. Residues Ala245 to Phe265 traverse the membrane as a helical segment. Over Lys266 to Arg268 the chain is Cytoplasmic. The chain crosses the membrane as a helical span at residues Thr269–Pro289. Topologically, residues Ser290 to Ala292 are periplasmic. A helical transmembrane segment spans residues Val293 to Met313. Residues Ser314–Thr330 are Cytoplasmic-facing. Residues Leu331–Ile351 form a helical membrane-spanning segment. Over Gly352–Asn355 the chain is Periplasmic. A helical transmembrane segment spans residues Met356–Ala376. The Cytoplasmic segment spans residues Pro377–Ala391.

Belongs to the major facilitator superfamily. DHA1 family. MdtL (TC 2.A.1.2.22) subfamily.

It is found in the cell inner membrane. Its function is as follows. Confers resistance to chloramphenicol. This chain is Multidrug resistance protein MdtL, found in Escherichia coli O6:K15:H31 (strain 536 / UPEC).